A 317-amino-acid chain; its full sequence is Melanocyte-stimulating hormone receptor (317 aa).

At 1 to 37 (MPVQGSQRRLLGSLNSTPTATPHLGLAANQTGARCLE) the chain is on the extracellular side. Asn29 is a glycosylation site (N-linked (GlcNAc...) asparagine). A helical transmembrane segment spans residues 38–63 (MSIPDGLFLSLGLVSLVENVLVVTAI). At 64–72 (AKNRNLHSP) the chain is on the cytoplasmic side. Residues 73-93 (MYCFICCLALSDLLVSGSNML) form a helical membrane-spanning segment. Over 94-118 (ETAVTLLLEAGALAARAAVVQQLDN) the chain is Extracellular. The chain crosses the membrane as a helical span at residues 119–140 (VIDVITCSSMLSSLCFLGAIAV). The Cytoplasmic segment spans residues 141 to 163 (DRYISIFYALRYHSIVTLPRARR). The chain crosses the membrane as a helical span at residues 164 to 183 (AIAAIWVASVLCSTLFIAYY). At 184–191 (DHAAVLLC) the chain is on the extracellular side. A helical membrane pass occupies residues 192–211 (LVVFFLAMLVLMAVLYVHML). Residues 212-240 (ARACQHAQGIARLHKRQRLAHQGFGLKGA) lie on the Cytoplasmic side of the membrane. The helical transmembrane segment at 241-266 (ATLTILLGIFFLCWGPFFLHLTLIVL) threads the bilayer. The Extracellular segment spans residues 267–279 (CPQHPTCSCIFKN). A helical membrane pass occupies residues 280–300 (FNLFLTLIICNAIIDPLIYAF). Over 301–317 (RSQELRRTLKEVLLCSW) the chain is Cytoplasmic. Cys315 carries S-palmitoyl cysteine lipidation.

This sequence belongs to the G-protein coupled receptor 1 family. In terms of assembly, interacts with MGRN1, but does not undergo MGRN1-mediated ubiquitination; this interaction competes with GNAS-binding and thus inhibits agonist-induced cAMP production. Interacts with OPN3; the interaction results in a decrease in MC1R-mediated cAMP signaling and ultimately a decrease in melanin production in melanocytes.

The protein resides in the cell membrane. Its function is as follows. Receptor for MSH (alpha, beta and gamma) and ACTH. The activity of this receptor is mediated by G proteins which activate adenylate cyclase. Mediates melanogenesis, the production of eumelanin (black/brown) and phaeomelanin (red/yellow), via regulation of cAMP signaling in melanocytes. This is Melanocyte-stimulating hormone receptor (MC1R) from Macaca nemestrina (Pig-tailed macaque).